The following is a 207-amino-acid chain: Large ribosomal subunit protein uL4 (207 aa).

The tract at residues 48–89 is disordered; the sequence is SHKVKNRSEVRGGGRKPWRQKGTGRARQGSIRSPQWRGGGVV. The span at 60–71 shows a compositional bias: basic residues; the sequence is GGRKPWRQKGTG.

This sequence belongs to the universal ribosomal protein uL4 family. As to quaternary structure, part of the 50S ribosomal subunit.

One of the primary rRNA binding proteins, this protein initially binds near the 5'-end of the 23S rRNA. It is important during the early stages of 50S assembly. It makes multiple contacts with different domains of the 23S rRNA in the assembled 50S subunit and ribosome. Its function is as follows. Forms part of the polypeptide exit tunnel. The chain is Large ribosomal subunit protein uL4 from Bacillus velezensis (strain DSM 23117 / BGSC 10A6 / LMG 26770 / FZB42) (Bacillus amyloliquefaciens subsp. plantarum).